The chain runs to 292 residues: Early E4 34 kDa protein (292 aa).

The protein belongs to the adenoviridae E4 30 to 34 kDa protein family. As to quaternary structure, interacts with E1B-55k.

It is found in the host nucleus. The protein localises to the host cytoplasm. Plays a major role to prevent cellular inhibition of viral genome replication by nuclear bodies. Assembles an SCF-like E3 ubiquitin ligase complex based on the cellular proteins ELOB, ELOC, CUL5 and RBX1, in cooperation with viral E1B-55K. This viral RING-type ligase ubiquitinates cellular substrates prior to proteasomal degradation: p53/TP53, LIG4, MRE11-RAD50-NBS1 (MRN) complex, ITGA3, DAXX and BLM. The protein is Early E4 34 kDa protein of Human adenovirus D serotype 9 (HAdV-9).